Reading from the N-terminus, the 72-residue chain is Aurein-2.5 (72 aa).

Positions 1-22 (MAFLKKSLFLVLFLGLVSLSIC) are cleaved as a signal peptide. The propeptide occupies 23-49 (EKEKRQNEEDEDENEAANHEEGSEEKR). The segment at 27 to 47 (RQNEEDEDENEAANHEEGSEE) is disordered. The span at 38-47 (AANHEEGSEE) shows a compositional bias: basic and acidic residues. The residue at position 65 (leucine 65) is a Leucine amide. A propeptide spanning residues 69-72 (NDLE) is cleaved from the precursor.

It belongs to the frog skin active peptide (FSAP) family. Aurein subfamily. As to quaternary structure, may be monomeric or may oligomerize as homodimers or homotrimers in Gram-positive and Gram-negative bacteria mimetic membranes. In terms of processing, C-terminal amidation enhances antibacterial activity. This increase may be due to stabilization of the alpha-helical structure at the membrane interface. Expressed by the skin dorsal glands.

It localises to the secreted. It is found in the target cell membrane. Functionally, amphipathic alpha-helical antimicrobial peptide with moderate to potent activity against Gram-positive bacteria, Gram-negative bacteria and fungi. Also shows a weak activity against biofilm of both Gram-positive and Gram-negative bacteria. Probably acts by disturbing membrane functions with its amphipathic structure. Kills fungi via membranolytic action. Enhanced sterol levels in lipid composition membranes reduce interaction of this peptide with membranes, having a protective effect against the lytic ability of the peptide. Shows anticancer activity. This Ranoidea aurea (Green and golden bell frog) protein is Aurein-2.5.